A 178-amino-acid chain; its full sequence is Nucleoside triphosphate/diphosphate phosphatase (178 aa).

Arg23 serves as the catalytic Proton donor. The Mg(2+) site is built by Asn87, Asp103, Asp105, Asp107, Asp120, and Glu123.

This sequence belongs to the Ntdp family. Mg(2+) is required as a cofactor.

The catalysed reaction is a ribonucleoside 5'-triphosphate + H2O = a ribonucleoside 5'-diphosphate + phosphate + H(+). It catalyses the reaction a ribonucleoside 5'-diphosphate + H2O = a ribonucleoside 5'-phosphate + phosphate + H(+). Has nucleoside phosphatase activity towards nucleoside triphosphates and nucleoside diphosphates. In Latilactobacillus sakei subsp. sakei (strain 23K) (Lactobacillus sakei subsp. sakei), this protein is Nucleoside triphosphate/diphosphate phosphatase.